A 119-amino-acid chain; its full sequence is Holo-[acyl-carrier-protein] synthase (119 aa).

Mg(2+) is bound by residues Asp-8 and Glu-58.

This sequence belongs to the P-Pant transferase superfamily. AcpS family. The cofactor is Mg(2+).

It is found in the cytoplasm. The catalysed reaction is apo-[ACP] + CoA = holo-[ACP] + adenosine 3',5'-bisphosphate + H(+). Functionally, transfers the 4'-phosphopantetheine moiety from coenzyme A to a Ser of acyl-carrier-protein. The sequence is that of Holo-[acyl-carrier-protein] synthase from Bacillus cereus (strain ZK / E33L).